A 442-amino-acid chain; its full sequence is MSNFIRRLVGKMKAISTGTNAIVSKKDSIYANWSKEQLIRRITELENANKPHSEKFQHIEDNKKRKISQEEVTRSKAKKAPKKFDFSKHNTRFIALRFAYLGWNYNGLAVQKEYTPLPTVEGTILEAMNKCKLVPSMVLQDYKFSRCGRTDKGVSAMNQVISLEVRSNLTDEEQRDPTNDSREIPYVHVLNQLLPDDIRISAVCLRPPPNFDARFSCVHRHYKYIFNGKNLNIEKMSKAASYFVGERDFRNFCKLDGSKQITNFKRTIISSKILPLSETFYCFDLVGSAFLWHQVRCMMAILFLVGQSLEVPEIVLRLTDIEKTPQRPVYEMANDIPLLLYDCKFPEMDWQEPTVDDYKAIKFTTATEALTLHYELKAAVCNIFKDVLPTANTNNFSKTIINLGDGRGKVVGTYVKLEDRSVMEPVEVVNAKYSKKKNNKNK.

Catalysis depends on aspartate 151, which acts as the Nucleophile. Tyrosine 222 is a binding site for substrate.

This sequence belongs to the tRNA pseudouridine synthase TruA family.

It is found in the nucleus. It catalyses the reaction uridine(38/39) in tRNA = pseudouridine(38/39) in tRNA. Formation of pseudouridines at positions 38 and 39 in the anticodon stem and loop of transfer RNAs. The sequence is that of tRNA pseudouridine(38/39) synthase (DEG1) from Saccharomyces cerevisiae (strain ATCC 204508 / S288c) (Baker's yeast).